A 367-amino-acid chain; its full sequence is Methylthioribose-1-phosphate isomerase (367 aa).

Substrate-binding positions include 54–56, R91, and Q201; that span reads RGA. D242 functions as the Proton donor in the catalytic mechanism. 252 to 253 serves as a coordination point for substrate; the sequence is NK.

Belongs to the eIF-2B alpha/beta/delta subunits family. MtnA subfamily.

The enzyme catalyses 5-(methylsulfanyl)-alpha-D-ribose 1-phosphate = 5-(methylsulfanyl)-D-ribulose 1-phosphate. It functions in the pathway amino-acid biosynthesis; L-methionine biosynthesis via salvage pathway; L-methionine from S-methyl-5-thio-alpha-D-ribose 1-phosphate: step 1/6. Its function is as follows. Catalyzes the interconversion of methylthioribose-1-phosphate (MTR-1-P) into methylthioribulose-1-phosphate (MTRu-1-P). This chain is Methylthioribose-1-phosphate isomerase, found in Acidiphilium cryptum (strain JF-5).